Reading from the N-terminus, the 303-residue chain is Acetylglutamate kinase (303 aa).

Residues 75-76 (GG), arginine 97, and asparagine 194 each bind substrate.

Belongs to the acetylglutamate kinase family. ArgB subfamily.

The protein localises to the cytoplasm. It catalyses the reaction N-acetyl-L-glutamate + ATP = N-acetyl-L-glutamyl 5-phosphate + ADP. The protein operates within amino-acid biosynthesis; L-arginine biosynthesis; N(2)-acetyl-L-ornithine from L-glutamate: step 2/4. Catalyzes the ATP-dependent phosphorylation of N-acetyl-L-glutamate. This is Acetylglutamate kinase from Gloeobacter violaceus (strain ATCC 29082 / PCC 7421).